Consider the following 279-residue polypeptide: MKHIARKRFGQHFLTDRLIIEGIVEAIAPLPGQPMVEIGPGLAAMTRPLVERLGHLTVIELDRDLARQLRSNPQLTVIESDVLRVDFLQLAEQVQSAGALRGAASQTPSPCKLRVVGNLPYNISTPILFHLLDAVEVIEDQHFMLQKEVIDRMVAMPSTSDYGRLSVMLQWRYAMENVLYVPPQSFDPPPRVDSAIVRMVPHAEPARLDVKLLSELVRVAFSQRRKLLRHTLGQWLEQHAFSGEFDVKRRAEEVPVAEYLALAQQVQTGTAQPEKIELL.

6 residues coordinate S-adenosyl-L-methionine: histidine 12, leucine 14, glycine 39, glutamate 60, aspartate 81, and asparagine 118.

The protein belongs to the class I-like SAM-binding methyltransferase superfamily. rRNA adenine N(6)-methyltransferase family. RsmA subfamily.

It is found in the cytoplasm. It carries out the reaction adenosine(1518)/adenosine(1519) in 16S rRNA + 4 S-adenosyl-L-methionine = N(6)-dimethyladenosine(1518)/N(6)-dimethyladenosine(1519) in 16S rRNA + 4 S-adenosyl-L-homocysteine + 4 H(+). In terms of biological role, specifically dimethylates two adjacent adenosines (A1518 and A1519) in the loop of a conserved hairpin near the 3'-end of 16S rRNA in the 30S particle. May play a critical role in biogenesis of 30S subunits. This chain is Ribosomal RNA small subunit methyltransferase A, found in Polaromonas naphthalenivorans (strain CJ2).